Here is a 226-residue protein sequence, read N- to C-terminus: Enolase-phosphatase E1 (226 aa).

This sequence belongs to the HAD-like hydrolase superfamily. MasA/MtnC family. Monomer. The cofactor is Mg(2+).

It catalyses the reaction 5-methylsulfanyl-2,3-dioxopentyl phosphate + H2O = 1,2-dihydroxy-5-(methylsulfanyl)pent-1-en-3-one + phosphate. It participates in amino-acid biosynthesis; L-methionine biosynthesis via salvage pathway; L-methionine from S-methyl-5-thio-alpha-D-ribose 1-phosphate: step 3/6. It functions in the pathway amino-acid biosynthesis; L-methionine biosynthesis via salvage pathway; L-methionine from S-methyl-5-thio-alpha-D-ribose 1-phosphate: step 4/6. Functionally, bifunctional enzyme that catalyzes the enolization of 2,3-diketo-5-methylthiopentyl-1-phosphate (DK-MTP-1-P) into the intermediate 2-hydroxy-3-keto-5-methylthiopentenyl-1-phosphate (HK-MTPenyl-1-P), which is then dephosphorylated to form the acireductone 1,2-dihydroxy-3-keto-5-methylthiopentene (DHK-MTPene). This chain is Enolase-phosphatase E1, found in Shewanella oneidensis (strain ATCC 700550 / JCM 31522 / CIP 106686 / LMG 19005 / NCIMB 14063 / MR-1).